The primary structure comprises 149 residues: Nucleoside diphosphate kinase 1 (149 aa).

ATP is bound by residues Lys-9, Phe-57, Arg-85, Thr-91, Arg-102, and Asn-112. Residue His-115 is the Pros-phosphohistidine intermediate of the active site.

This sequence belongs to the NDK family. Homohexamer. Can also form dodecamers. Requires Mg(2+) as cofactor.

The protein resides in the nucleus. It catalyses the reaction a 2'-deoxyribonucleoside 5'-diphosphate + ATP = a 2'-deoxyribonucleoside 5'-triphosphate + ADP. The catalysed reaction is a ribonucleoside 5'-diphosphate + ATP = a ribonucleoside 5'-triphosphate + ADP. Functionally, major role in the synthesis of nucleoside triphosphates other than ATP. The ATP gamma phosphate is transferred to the NDP beta phosphate via a ping-pong mechanism, using a phosphorylated active-site intermediate. Involved in transcription regulation. Has G-quadruplex (G4) DNA-binding activity, which is independent of its nucleotide-binding and kinase activity. Binds folded G4 with low nanomolar affinity and corresponding unfolded G-rich DNA more weakly. Stabilizes folded G4s regardless of whether they are prefolded or not. In Zea mays (Maize), this protein is Nucleoside diphosphate kinase 1.